The primary structure comprises 583 residues: Mitogen-activated protein kinase 4 (583 aa).

Residues 20-312 (FIDFQPLGFG…AEMGLQHPYM (293 aa)) enclose the Protein kinase domain. ATP-binding positions include 26-34 (LGFGVNGLV) and Lys-49. Asp-149 serves as the catalytic Proton acceptor. Ser-186 is modified (phosphoserine; by PAK1, PAK2 and PAK3). Residues 186–188 (SEG) carry the SEG motif motif. Residues 328–333 (FRIEDE) carry the FRIEDE motif motif. 2 stretches are compositionally biased toward basic and acidic residues: residues 366–379 (DRCQ…RDPR) and 391–410 (VDPR…QSHS). The tract at residues 366 to 410 (DRCQDASEVQRDPRAGSTPLAEDVQVDPRKDSQSSSERFLEQSHS) is disordered. Residue Ser-430 is modified to Phosphoserine. The interval 495-531 (STQSGSERASPPPDAPEPRLSASPPGHPTPIDGGASP) is disordered.

Belongs to the protein kinase superfamily. CMGC Ser/Thr protein kinase family. MAP kinase subfamily. As to quaternary structure, homodimer. Heterodimer with ERK3/MAPK6. Interacts with (via FRIEDE motif) MAPKAPK5. The cofactor is Mg(2+). In terms of processing, phosphorylated at Ser-186 by PAK1, PAK2 and PAK3 resulting in catalytic activation. Phosphorylated by MAPKAPK5 at other sites.

The protein resides in the cytoplasm. It localises to the nucleus. The enzyme catalyses L-seryl-[protein] + ATP = O-phospho-L-seryl-[protein] + ADP + H(+). It carries out the reaction L-threonyl-[protein] + ATP = O-phospho-L-threonyl-[protein] + ADP + H(+). With respect to regulation, activated by phosphorylation at Ser-186. In terms of biological role, atypical MAPK protein. Phosphorylates microtubule-associated protein 2 (MAP2) and MAPKAPK5. The precise role of the complex formed with MAPKAPK5 is still unclear, but the complex follows a complex set of phosphorylation events: upon interaction with atypical MAPKAPK5, ERK4/MAPK4 is phosphorylated at Ser-186 and then mediates phosphorylation and activation of MAPKAPK5, which in turn phosphorylates ERK4/MAPK4. May promote entry in the cell cycle. The chain is Mitogen-activated protein kinase 4 (Mapk4) from Mus musculus (Mouse).